The chain runs to 158 residues: NAD(P)H-quinone oxidoreductase subunit N (158 aa).

Belongs to the complex I NdhN subunit family. In terms of assembly, NDH-1 can be composed of about 15 different subunits; different subcomplexes with different compositions have been identified which probably have different functions.

It is found in the cellular thylakoid membrane. The enzyme catalyses a plastoquinone + NADH + (n+1) H(+)(in) = a plastoquinol + NAD(+) + n H(+)(out). It carries out the reaction a plastoquinone + NADPH + (n+1) H(+)(in) = a plastoquinol + NADP(+) + n H(+)(out). Its function is as follows. NDH-1 shuttles electrons from an unknown electron donor, via FMN and iron-sulfur (Fe-S) centers, to quinones in the respiratory and/or the photosynthetic chain. The immediate electron acceptor for the enzyme in this species is believed to be plastoquinone. Couples the redox reaction to proton translocation, and thus conserves the redox energy in a proton gradient. Cyanobacterial NDH-1 also plays a role in inorganic carbon-concentration. This is NAD(P)H-quinone oxidoreductase subunit N from Prochlorococcus marinus (strain MIT 9301).